Reading from the N-terminus, the 317-residue chain is Porphobilinogen deaminase (317 aa).

An S-(dipyrrolylmethanemethyl)cysteine modification is found at cysteine 245.

It belongs to the HMBS family. Monomer. The cofactor is dipyrromethane.

The enzyme catalyses 4 porphobilinogen + H2O = hydroxymethylbilane + 4 NH4(+). It participates in porphyrin-containing compound metabolism; protoporphyrin-IX biosynthesis; coproporphyrinogen-III from 5-aminolevulinate: step 2/4. It functions in the pathway porphyrin-containing compound metabolism; chlorophyll biosynthesis. In terms of biological role, tetrapolymerization of the monopyrrole PBG into the hydroxymethylbilane pre-uroporphyrinogen in several discrete steps. This chain is Porphobilinogen deaminase, found in Synechococcus sp. (strain CC9605).